The chain runs to 263 residues: Heat-labile enterotoxin IIB, A chain (263 aa).

The first 20 residues, 1–20, serve as a signal peptide directing secretion; that stretch reads MAKVISFFISLFLISFPLYA. 26–39 provides a ligand contact to NAD(+); it reads ADSRTPDEVRRSGG. Glu-130 is an active-site residue. An intrachain disulfide couples Cys-205 to Cys-217.

This sequence belongs to the enterotoxin A family. Heterohexamer of one A chain and of five B chains.

In terms of biological role, the biological activity of the toxin is produced by the A chain, which activates intracellular adenyl cyclase. The sequence is that of Heat-labile enterotoxin IIB, A chain from Escherichia coli.